A 200-amino-acid polypeptide reads, in one-letter code: Imidazole glycerol phosphate synthase subunit HisH (200 aa).

The Glutamine amidotransferase type-1 domain occupies 3-200 (DLALIDAGGA…LRNFLEMSFP (198 aa)). C78 functions as the Nucleophile in the catalytic mechanism. Residues H179 and E181 contribute to the active site.

In terms of assembly, heterodimer of HisH and HisF.

Its subcellular location is the cytoplasm. The enzyme catalyses 5-[(5-phospho-1-deoxy-D-ribulos-1-ylimino)methylamino]-1-(5-phospho-beta-D-ribosyl)imidazole-4-carboxamide + L-glutamine = D-erythro-1-(imidazol-4-yl)glycerol 3-phosphate + 5-amino-1-(5-phospho-beta-D-ribosyl)imidazole-4-carboxamide + L-glutamate + H(+). The catalysed reaction is L-glutamine + H2O = L-glutamate + NH4(+). It participates in amino-acid biosynthesis; L-histidine biosynthesis; L-histidine from 5-phospho-alpha-D-ribose 1-diphosphate: step 5/9. IGPS catalyzes the conversion of PRFAR and glutamine to IGP, AICAR and glutamate. The HisH subunit catalyzes the hydrolysis of glutamine to glutamate and ammonia as part of the synthesis of IGP and AICAR. The resulting ammonia molecule is channeled to the active site of HisF. This Xanthomonas campestris pv. campestris (strain 8004) protein is Imidazole glycerol phosphate synthase subunit HisH.